Reading from the N-terminus, the 520-residue chain is General transcription factor 3C polypeptide 5 (520 aa).

At Ala2 the chain carries N-acetylalanine. The interval 466–520 (LFSNTGKADRGKEQLMFESGEEEEEEEEEEEEEEEDFKPSDGSENEMETEILDYV) is disordered. Composition is skewed to acidic residues over residues 484–501 (SGEEEEEEEEEEEEEEED) and 508–520 (SENEMETEILDYV).

Belongs to the TFIIIC subunit 5 family. Part of the TFIIIC subcomplex TFIIIC2, consisting of six subunits, GTF3C1, GTF3C2, GTF3C3, GTF3C4, GTF3C5 and GTF3C6. Interacts with BRF1, GTF3C6 and TBP.

The protein localises to the nucleus. Functionally, involved in RNA polymerase III-mediated transcription. Integral, tightly associated component of the DNA-binding TFIIIC2 subcomplex that directly binds tRNA and virus-associated RNA promoters. In Mus musculus (Mouse), this protein is General transcription factor 3C polypeptide 5 (Gtf3c5).